The following is a 368-amino-acid chain: Nuclease EXOG, mitochondrial (368 aa).

The N-terminal 41 residues, 1 to 41, are a transit peptide targeting the mitochondrion; sequence MAIKSIASRLRGSRRFLSGFVAGAVVGAAGAGLAALQFFRS. His-140 (proton acceptor) is an active-site residue. Residue Asn-171 participates in a divalent metal cation binding.

Belongs to the DNA/RNA non-specific endonuclease family. Homodimer. The cofactor is a divalent metal cation. Ubiquitous.

Its subcellular location is the mitochondrion inner membrane. Functionally, endo/exonuclease with nicking activity towards supercoiled DNA, a preference for single-stranded DNA and 5'-3' exonuclease activity. The polypeptide is Nuclease EXOG, mitochondrial (EXOG) (Homo sapiens (Human)).